An 815-amino-acid chain; its full sequence is Probable oligoxyloglucan-reducing end-specific xyloglucanase (815 aa).

Residues M1 to A19 form the signal peptide. The Nucleophile role is filled by D58. The N-linked (GlcNAc...) asparagine glycan is linked to N113. Residues F118–T128 form a BNR 1 repeat. N180 carries N-linked (GlcNAc...) asparagine glycosylation. The stretch at Y218–E228 is one BNR 2 repeat. N-linked (GlcNAc...) asparagine glycosylation is found at N246, N290, and N304. A BNR 3 repeat occupies Y351–K361. N387 carries N-linked (GlcNAc...) asparagine glycosylation. Residue D489 is the Proton donor of the active site. The stretch at Y545–K555 is one BNR 4 repeat. N-linked (GlcNAc...) asparagine glycans are attached at residues N564 and N603. The BNR 5 repeat unit spans residues Y649–Y658. N662 is a glycosylation site (N-linked (GlcNAc...) asparagine). BNR repeat units follow at residues Y696–K706 and Y749–D759. N-linked (GlcNAc...) asparagine glycosylation is present at N754.

The protein belongs to the glycosyl hydrolase 74 family.

The protein localises to the secreted. It catalyses the reaction Hydrolysis of cellobiose from the reducing end of xyloglucans consisting of a beta-(1-&gt;4)-linked glucan carrying alpha-D-xylosyl groups on O-6 of the glucose residues. To be a substrate, the first residue must be unsubstituted, the second residue may bear a xylosyl group, whether further glycosylated or not, and the third residue, which becomes the new terminus by the action of the enzyme, is preferably xylosylated, but this xylose residue must not be further substituted.. In terms of biological role, oligoxyloglucan-reducing end-specific xyloglucanase involved in degradation of xyloglucans. Releases the first two glycosyl segments from oligoxyloglucans. Active against cotton xyloglucan, tamarind xyloglucan and tamarind xyloglucan oligomers. The chain is Probable oligoxyloglucan-reducing end-specific xyloglucanase (xgcA) from Neosartorya fischeri (strain ATCC 1020 / DSM 3700 / CBS 544.65 / FGSC A1164 / JCM 1740 / NRRL 181 / WB 181) (Aspergillus fischerianus).